Consider the following 215-residue polypeptide: Protein GrpE (215 aa).

Over residues 1–28 the composition is skewed to polar residues; that stretch reads MKHTSDTPSNSDMPSDSQATQPNASATG. The tract at residues 1 to 52 is disordered; it reads MKHTSDTPSNSDMPSDSQATQPNASATGQAAHAYSSQAQRASADAQAVAGDE. Positions 29–52 are enriched in low complexity; it reads QAAHAYSSQAQRASADAQAVAGDE.

This sequence belongs to the GrpE family. Homodimer.

The protein localises to the cytoplasm. Participates actively in the response to hyperosmotic and heat shock by preventing the aggregation of stress-denatured proteins, in association with DnaK and GrpE. It is the nucleotide exchange factor for DnaK and may function as a thermosensor. Unfolded proteins bind initially to DnaJ; upon interaction with the DnaJ-bound protein, DnaK hydrolyzes its bound ATP, resulting in the formation of a stable complex. GrpE releases ADP from DnaK; ATP binding to DnaK triggers the release of the substrate protein, thus completing the reaction cycle. Several rounds of ATP-dependent interactions between DnaJ, DnaK and GrpE are required for fully efficient folding. This chain is Protein GrpE, found in Ralstonia pickettii (strain 12J).